Reading from the N-terminus, the 170-residue chain is Non-specific lipid transfer protein GPI-anchored 5 (170 aa).

An N-terminal signal peptide occupies residues 1–24 (MKMEMGLVFLTVFMAVMSSTMVSA). 4 disulfide bridges follow: cysteine 28/cysteine 69, cysteine 38/cysteine 53, cysteine 54/cysteine 95, and cysteine 67/cysteine 105. 4 N-linked (GlcNAc...) asparagine glycosylation sites follow: asparagine 45, asparagine 84, asparagine 124, and asparagine 130. Positions 105-148 (CNTGGGGGGSTSDSPAESPNSSGPGNGSKTVPVGEGDGPPSSDG) are disordered. Residue serine 146 is the site of GPI-anchor amidated serine attachment. Positions 147 to 170 (DGSSIKFSFPLIAFFSAVSYMAIF) are cleaved as a propeptide — removed in mature form.

It belongs to the plant LTP family. As to expression, expressed in seedlings, preferentially in the endodermis of hypocotyls and roots, as well as in anthers, sepals and flower tori.

It is found in the cell membrane. Functionally, lipid transfer protein involved in seed and ovule maturation and development, probably by regulating the fatty acids homeostasis during suberin and sporopollenin biosynthesis or deposition. Contributes to pre-invasive defense against some non-host powdery mildew pathogens by preventing the penetration of the epidermal cell wall by the fungal agents (e.g. Blumeria graminis f. sp. hordei (Bgh)). The sequence is that of Non-specific lipid transfer protein GPI-anchored 5 from Arabidopsis thaliana (Mouse-ear cress).